Here is a 267-residue protein sequence, read N- to C-terminus: Tryptophan synthase alpha chain (267 aa).

Catalysis depends on proton acceptor residues E49 and D60.

Belongs to the TrpA family. Tetramer of two alpha and two beta chains.

It catalyses the reaction (1S,2R)-1-C-(indol-3-yl)glycerol 3-phosphate + L-serine = D-glyceraldehyde 3-phosphate + L-tryptophan + H2O. It participates in amino-acid biosynthesis; L-tryptophan biosynthesis; L-tryptophan from chorismate: step 5/5. Its function is as follows. The alpha subunit is responsible for the aldol cleavage of indoleglycerol phosphate to indole and glyceraldehyde 3-phosphate. This chain is Tryptophan synthase alpha chain, found in Salinispora arenicola (strain CNS-205).